Reading from the N-terminus, the 193-residue chain is dTTP/UTP pyrophosphatase (193 aa).

The Proton acceptor role is filled by Asp70.

It belongs to the Maf family. YhdE subfamily. It depends on a divalent metal cation as a cofactor.

The protein localises to the cytoplasm. The enzyme catalyses dTTP + H2O = dTMP + diphosphate + H(+). It catalyses the reaction UTP + H2O = UMP + diphosphate + H(+). Nucleoside triphosphate pyrophosphatase that hydrolyzes dTTP and UTP. May have a dual role in cell division arrest and in preventing the incorporation of modified nucleotides into cellular nucleic acids. This is dTTP/UTP pyrophosphatase from Ruminiclostridium cellulolyticum (strain ATCC 35319 / DSM 5812 / JCM 6584 / H10) (Clostridium cellulolyticum).